Here is a 272-residue protein sequence, read N- to C-terminus: NH(3)-dependent NAD(+) synthetase (272 aa).

Position 45–52 (G45–S52) interacts with ATP. D51 is a binding site for Mg(2+). R138 lines the deamido-NAD(+) pocket. Residue T158 coordinates ATP. E163 lines the Mg(2+) pocket. 2 residues coordinate deamido-NAD(+): K171 and D178. Residues K187 and T209 each coordinate ATP. H258–K259 provides a ligand contact to deamido-NAD(+).

This sequence belongs to the NAD synthetase family. In terms of assembly, homodimer.

The catalysed reaction is deamido-NAD(+) + NH4(+) + ATP = AMP + diphosphate + NAD(+) + H(+). The protein operates within cofactor biosynthesis; NAD(+) biosynthesis; NAD(+) from deamido-NAD(+) (ammonia route): step 1/1. Catalyzes the ATP-dependent amidation of deamido-NAD to form NAD. Uses ammonia as a nitrogen source. This chain is NH(3)-dependent NAD(+) synthetase, found in Bacillus cereus (strain ATCC 14579 / DSM 31 / CCUG 7414 / JCM 2152 / NBRC 15305 / NCIMB 9373 / NCTC 2599 / NRRL B-3711).